Consider the following 490-residue polypeptide: Bifunctional protein HldE (490 aa).

The ribokinase stretch occupies residues 1 to 330 (MDRTNIENFL…EAMAHHALEY (330 aa)). 205–208 (NRKE) contacts ATP. Residue aspartate 275 is part of the active site. Positions 356–490 (FTNGCFDLLH…ERILDRYEQG (135 aa)) are cytidylyltransferase.

In the N-terminal section; belongs to the carbohydrate kinase PfkB family. This sequence in the C-terminal section; belongs to the cytidylyltransferase family. As to quaternary structure, homodimer.

It carries out the reaction D-glycero-beta-D-manno-heptose 7-phosphate + ATP = D-glycero-beta-D-manno-heptose 1,7-bisphosphate + ADP + H(+). It catalyses the reaction D-glycero-beta-D-manno-heptose 1-phosphate + ATP + H(+) = ADP-D-glycero-beta-D-manno-heptose + diphosphate. It participates in nucleotide-sugar biosynthesis; ADP-L-glycero-beta-D-manno-heptose biosynthesis; ADP-L-glycero-beta-D-manno-heptose from D-glycero-beta-D-manno-heptose 7-phosphate: step 1/4. The protein operates within nucleotide-sugar biosynthesis; ADP-L-glycero-beta-D-manno-heptose biosynthesis; ADP-L-glycero-beta-D-manno-heptose from D-glycero-beta-D-manno-heptose 7-phosphate: step 3/4. Functionally, catalyzes the phosphorylation of D-glycero-D-manno-heptose 7-phosphate at the C-1 position to selectively form D-glycero-beta-D-manno-heptose-1,7-bisphosphate. Catalyzes the ADP transfer from ATP to D-glycero-beta-D-manno-heptose 1-phosphate, yielding ADP-D-glycero-beta-D-manno-heptose. The chain is Bifunctional protein HldE from Syntrophotalea carbinolica (strain DSM 2380 / NBRC 103641 / GraBd1) (Pelobacter carbinolicus).